The following is a 126-amino-acid chain: Large ribosomal subunit protein bL17 (126 aa).

It belongs to the bacterial ribosomal protein bL17 family. In terms of assembly, part of the 50S ribosomal subunit. Contacts protein L32.

The protein is Large ribosomal subunit protein bL17 of Xylella fastidiosa (strain 9a5c).